The chain runs to 318 residues: NAD(P)H-dependent D-xylose reductase (318 aa).

Catalysis depends on tyrosine 48, which acts as the Proton donor. Residue histidine 110 participates in substrate binding. Residues 165–166, 214–223, and 270–280 each bind NAD(+); these read SN, SSFGPQSFVE, and KSNTVPRLLEN.

This sequence belongs to the aldo/keto reductase family.

It catalyses the reaction xylitol + NAD(+) = D-xylose + NADH + H(+). The enzyme catalyses xylitol + NADP(+) = D-xylose + NADPH + H(+). It functions in the pathway carbohydrate metabolism; D-xylose degradation. With respect to regulation, NADP(+) is a potent inhibitor of both the NADPH- and NADH-linked xylose reduction, whereas NAD(+) showS strong inhibition only with the NADH-linked reaction. In terms of biological role, reduces D-xylose into xylitol. Has a preference for NADPH, but can also utilize NADH as cosubstrate. In Scheffersomyces stipitis (strain ATCC 58785 / CBS 6054 / NBRC 10063 / NRRL Y-11545) (Yeast), this protein is NAD(P)H-dependent D-xylose reductase (XYL1).